The chain runs to 94 residues: Parvalbumin beta 4 (94 aa).

Ala1 is subject to N-acetylalanine. 2 consecutive EF-hand domains span residues 36 to 63 (FFAI…FSAG) and 67 to 94 (LSDA…EFAA). Ca(2+) contacts are provided by Asp41, Asp43, Ser45, Phe47, Glu49, Glu52, Asp80, Asp82, Asp84, Met86, and Glu91.

Belongs to the parvalbumin family.

In muscle, parvalbumin is thought to be involved in relaxation after contraction. It binds two calcium ions. The sequence is that of Parvalbumin beta 4 from Merluccius bilinearis (Silver hake).